The following is a 182-amino-acid chain: uncharacterized protein (182 aa).

It localises to the plastid. Its subcellular location is the cyanelle. This is an uncharacterized protein from Cyanophora paradoxa.